The chain runs to 143 residues: Transcription antitermination protein NusB (143 aa).

Belongs to the NusB family.

Its function is as follows. Involved in transcription antitermination. Required for transcription of ribosomal RNA (rRNA) genes. Binds specifically to the boxA antiterminator sequence of the ribosomal RNA (rrn) operons. This is Transcription antitermination protein NusB from Desulforamulus reducens (strain ATCC BAA-1160 / DSM 100696 / MI-1) (Desulfotomaculum reducens).